We begin with the raw amino-acid sequence, 80 residues long: RNA-binding protein Hfq (80 aa).

The region spanning 10–70 is the Sm domain; that stretch reads DAFLNQVRKE…ISTISPLRPV (61 aa).

This sequence belongs to the Hfq family. In terms of assembly, homohexamer.

Its function is as follows. RNA chaperone that binds small regulatory RNA (sRNAs) and mRNAs to facilitate mRNA translational regulation in response to envelope stress, environmental stress and changes in metabolite concentrations. Also binds with high specificity to tRNAs. The protein is RNA-binding protein Hfq of Desulforamulus reducens (strain ATCC BAA-1160 / DSM 100696 / MI-1) (Desulfotomaculum reducens).